We begin with the raw amino-acid sequence, 370 residues long: Quinolinate synthase (370 aa).

The iminosuccinate site is built by His-62 and Ser-83. Residue Cys-128 coordinates [4Fe-4S] cluster. Iminosuccinate contacts are provided by residues 154 to 156 and Ser-171; that span reads YAN. Cys-215 provides a ligand contact to [4Fe-4S] cluster. Residues 241 to 243 and Thr-258 contribute to the iminosuccinate site; that span reads HPE. Cys-312 is a [4Fe-4S] cluster binding site.

The protein belongs to the quinolinate synthase family. Type 1 subfamily. It depends on [4Fe-4S] cluster as a cofactor.

It is found in the cytoplasm. It catalyses the reaction iminosuccinate + dihydroxyacetone phosphate = quinolinate + phosphate + 2 H2O + H(+). It participates in cofactor biosynthesis; NAD(+) biosynthesis; quinolinate from iminoaspartate: step 1/1. Its function is as follows. Catalyzes the condensation of iminoaspartate with dihydroxyacetone phosphate to form quinolinate. This is Quinolinate synthase from Neisseria meningitidis serogroup C / serotype 2a (strain ATCC 700532 / DSM 15464 / FAM18).